We begin with the raw amino-acid sequence, 624 residues long: 1-deoxy-D-xylulose-5-phosphate synthase (624 aa).

Residues H80 and 121-123 (GHS) contribute to the thiamine diphosphate site. D152 lines the Mg(2+) pocket. Thiamine diphosphate contacts are provided by residues 153–154 (GA), N181, Y288, and E370. N181 contributes to the Mg(2+) binding site.

This sequence belongs to the transketolase family. DXPS subfamily. Homodimer. The cofactor is Mg(2+). Thiamine diphosphate serves as cofactor.

The enzyme catalyses D-glyceraldehyde 3-phosphate + pyruvate + H(+) = 1-deoxy-D-xylulose 5-phosphate + CO2. It participates in metabolic intermediate biosynthesis; 1-deoxy-D-xylulose 5-phosphate biosynthesis; 1-deoxy-D-xylulose 5-phosphate from D-glyceraldehyde 3-phosphate and pyruvate: step 1/1. In terms of biological role, catalyzes the acyloin condensation reaction between C atoms 2 and 3 of pyruvate and glyceraldehyde 3-phosphate to yield 1-deoxy-D-xylulose-5-phosphate (DXP). This is 1-deoxy-D-xylulose-5-phosphate synthase from Proteus mirabilis (strain HI4320).